We begin with the raw amino-acid sequence, 322 residues long: Solute carrier family 35 member B1 (322 aa).

8 helical membrane-spanning segments follow: residues 12-32, 51-71, 85-105, 136-156, 168-188, 210-230, 243-263, and 285-305; these read LRLPLCFLGVFVCYFYYGILQ, FALTLVFIQCVVNAVFAKILI, WLYAACSVSYLGAMVSSNSAL, YPMAKYLCVLLIVAGVALFMY, TIGYGELLLLLSLTLDGLTGV, LWSTLLLGAGILFTGELWEFL, ILLFGLTSALGQSFIFMTVVY, and VILFANPISPMQWVGTVLVFL. The Di-lysine motif motif lies at 318–322; it reads KKTSH.

It belongs to the nucleotide-sugar transporter family. SLC35B subfamily.

It is found in the endoplasmic reticulum membrane. The catalysed reaction is ADP(in) + ATP(out) = ADP(out) + ATP(in). It carries out the reaction UDP(out) + ATP(in) = UDP(in) + ATP(out). It catalyses the reaction UTP(out) + ATP(in) = UTP(in) + ATP(out). The enzyme catalyses dATP(out) + ATP(in) = dATP(in) + ATP(out). Its function is as follows. ATP:ADP antiporter that catalyzes the exchange of ATP and ADP across the endoplasmic reticulum (ER) membrane. Imports ATP from the cytosol to the ER lumen and exports ADP in the opposite direction. Regulates ER energy metabolism and protein biogenesis. Appears to be part of a calcium-dependent ER to cytosol low energy response axis, where calcium efflux from ER to the cytosol triggers ATP import into the ER lumen to maintain sufficient ATP supply. Provides ATP to ER chaperone HSPA5 that drives protein folding and trafficking in the ER. Can transport dATP, UTP or UDP in exchange for ATP, but the physiological relevance of this process remains to be established. This Bos taurus (Bovine) protein is Solute carrier family 35 member B1 (SLC35B1).